The following is a 356-amino-acid chain: Epoxide hydrolase B (356 aa).

One can recognise an AB hydrolase-1 domain in the interval 28 to 129 (PLVVLLHGFP…RCAGVVGISV (102 aa)). The active-site Nucleophile is Asp-104. Residue His-333 is the Proton acceptor of the active site.

Belongs to the AB hydrolase superfamily. Epoxide hydrolase family. Homodimer.

It catalyses the reaction an epoxide + H2O = an ethanediol. Functionally, could be involved in detoxification of extraneous host-cell epoxides. Catalyzes the hydrolysis of small aromatic epoxide-containing substrates such as trans-1,3-diphenylpropene oxide, trans and cis-stilbene oxide, and terpenoid epoxide. In Mycobacterium tuberculosis (strain CDC 1551 / Oshkosh), this protein is Epoxide hydrolase B.